A 545-amino-acid polypeptide reads, in one-letter code: Glucans biosynthesis protein G (545 aa).

An N-terminal signal peptide occupies residues 1 to 34; the sequence is MVSLLRCQSFKPSSSLICSLALSAAFALSSSAFA. The disordered stretch occupies residues 38–60; the sequence is KPAENKPATPVVSPPKATAQPAN.

This sequence belongs to the OpgD/OpgG family.

The protein localises to the periplasm. Its pathway is glycan metabolism; osmoregulated periplasmic glucan (OPG) biosynthesis. Involved in the biosynthesis of osmoregulated periplasmic glucans (OPGs). This chain is Glucans biosynthesis protein G, found in Shewanella sp. (strain MR-4).